The following is a 2171-amino-acid chain: Voltage-dependent L-type calcium channel subunit alpha-1C (2171 aa).

At 1-154 the chain is on the cytoplasmic side; that stretch reads MLRALVQPAT…RACISIVEWK (154 aa). The segment at 77–98 is calmodulin-binding; it reads GAALSWQAAIDAARQAKLMGSA. The segment at 103 to 128 is disordered; that stretch reads ISTVSSTQRKRQQYGKPKKQGSTTAT. The segment covering 110 to 121 has biased composition (basic residues); the sequence is QRKRQQYGKPKK. Residues 141 to 438 form an I repeat; sequence NPIRRACISI…LVLGVLSGEF (298 aa). A helical membrane pass occupies residues 155-173; it reads PFEIIILLTIFANCVALAI. At 174–188 the chain is on the extracellular side; the sequence is YIPFPEDDSNATNSN. N-linked (GlcNAc...) asparagine glycosylation occurs at Asn-183. The helical transmembrane segment at 189–209 threads the bilayer; the sequence is LERVEYLFLIIFTVEAFLKVI. The Cytoplasmic segment spans residues 210–218; it reads AYGLLFHPN. Residues 219 to 239 traverse the membrane as a helical segment; that stretch reads AYLRNGWNLLDFIIVVVGLFS. At 240-262 the chain is on the extracellular side; the sequence is AILEQATKADGANALGGKGAGFD. Residues 263–281 traverse the membrane as a helical segment; it reads VKALRAFRVLRPLRLVSGV. Residues 282-298 are Cytoplasmic-facing; sequence PSLQVVLNSIIKAMVPL. Residues 299 to 320 traverse the membrane as a helical segment; that stretch reads LHIALLVLFVIIIYAIIGLELF. The Extracellular segment spans residues 321 to 380; that stretch reads MGKMHKTCYNQEGVADVPAEDDPSPCALETGHGRQCQNGTVCKPGWDGPKHGITNFDNFA. 2 disulfides stabilise this stretch: Cys-328–Cys-356 and Cys-346–Cys-362. A glycan (N-linked (GlcNAc...) asparagine) is linked at Asn-358. An intramembrane region (pore-forming) is located at residues 381 to 402; sequence FAMLTVFQCITMEGWTDVLYWM. A Selectivity filter of repeat I motif is present at residues 391 to 394; sequence TMEG. Glu-393 is a Ca(2+) binding site. Over 403–410 the chain is Extracellular; sequence QDAMGYEL. A helical membrane pass occupies residues 411-431; sequence PWVYFVSLVIFGSFFVLNLVL. Topologically, residues 432–554 are cytoplasmic; the sequence is GVLSGEFSKE…RKCRAAVKSN (123 aa). Residues 458–475 form an AID/alpha-interaction domain; mediates interaction with the beta subunit region; sequence QQLEEDLKGYLDWITQAE. Positions 479-511 are disordered; it reads PENEDEGMDEEKPRNMSMPTSETESVNTENVAG. A compositionally biased stretch (polar residues) spans 495–508; the sequence is SMPTSETESVNTEN. Ser-499 carries the phosphoserine modification. Phosphothreonine is present on Thr-506. The stretch at 540–786 is one II repeat; that stretch reads NRFCRRKCRA…VFLAIAVDNL (247 aa). Residues 555 to 573 form a helical membrane-spanning segment; sequence VFYWLVIFLVFLNTLTIAS. Residues 574-584 are Extracellular-facing; that stretch reads EHYNQPHWLTE. Residues 585–605 traverse the membrane as a helical segment; that stretch reads VQDTANKALLALFTAEMLLKM. The Cytoplasmic segment spans residues 606-616; that stretch reads YSLGLQAYFVS. The chain crosses the membrane as a helical span at residues 617-636; the sequence is LFNRFDCFIVCGGILETILV. Topologically, residues 637–645 are extracellular; sequence ETKVMSPLG. A helical transmembrane segment spans residues 646-664; that stretch reads ISVLRCVRLLRIFKITRYW. Over 665–683 the chain is Cytoplasmic; that stretch reads NSLSNLVASLLNSVRSIAS. The chain crosses the membrane as a helical span at residues 684 to 703; it reads LLLLLFLFIIIFSLLGMQLF. The Extracellular segment spans residues 704–723; it reads GGKFNFDEMQTRRSTFDNFP. Positions 724–745 form an intramembrane region, pore-forming; the sequence is QSLLTVFQILTGEDWNSVMYDG. The Selectivity filter of repeat II motif lies at 734-737; it reads TGED. Ca(2+) is bound at residue Glu-736. Topologically, residues 746-755 are extracellular; that stretch reads IMAYGGPSFP. A helical membrane pass occupies residues 756–775; that stretch reads GMLVCIYFIILFICGNYILL. Topologically, residues 776–930 are cytoplasmic; sequence NVFLAIAVDN…LQCHRIVNDT (155 aa). Residues 794–891 form a disordered region; that stretch reads SAQKEEEEEK…EMPVGPRPRP (98 aa). The segment covering 813-836 has biased composition (basic and acidic residues); sequence SPEKKQEVVGKPALEEAKEEKIEL. Phosphoserine is present on residues Ser-838 and Ser-845. Residues 859 to 906 are interaction with STAC2; it reads NESEDKSPYPNPETTGEEDEEEPEMPVGPRPRPLSELHLKEKAVPMPE. Over residues 873-882 the composition is skewed to acidic residues; sequence TGEEDEEEPE. Residues 917–1199 form an III repeat; it reads NRFRLQCHRI…IFVGFVIVTF (283 aa). Residues 931-949 form a helical membrane-spanning segment; that stretch reads IFTNLILFFILLSSISLAA. Over 950–961 the chain is Extracellular; it reads EDPVQHTSFRNH. A helical membrane pass occupies residues 962 to 981; that stretch reads ILFYFDIVFTTIFTIEIALK. Topologically, residues 982–997 are cytoplasmic; it reads MTAYGAFLHKGSFCRN. Residues 998–1016 traverse the membrane as a helical segment; it reads YFNILDLLVVSVSLISFGI. Residues 1017-1023 lie on the Extracellular side of the membrane; it reads QSSAINV. The chain crosses the membrane as a helical span at residues 1024 to 1042; that stretch reads VKILRVLRVLRPLRAINRA. The Cytoplasmic segment spans residues 1043 to 1061; sequence KGLKHVVQCVFVAIRTIGN. A helical membrane pass occupies residues 1062–1081; the sequence is IVIVTTLLQFMFACIGVQLF. Topologically, residues 1082 to 1131 are extracellular; that stretch reads KGKLYTCSDSSKQTEAECKGNYITYKDGEVDHPIIQPRSWENSKFDFDNV. The cysteines at positions 1088 and 1099 are disulfide-linked. A dihydropyridine binding region spans residues 1119 to 1208; it reads RSWENSKFDF…FQEQGEQEYK (90 aa). An intramembrane region (pore-forming) is located at residues 1132–1152; that stretch reads LAAMMALFTVSTFEGWPELLY. The Selectivity filter of repeat III motif lies at 1143 to 1146; it reads TFEG. Glu-1145 contacts Ca(2+). The Extracellular portion of the chain corresponds to 1153–1169; sequence RSIDSHTEDKGPIYNYR. Residues 1170–1191 form a helical membrane-spanning segment; the sequence is VEISIFFIIYIIIIAFFMMNIF. The Cytoplasmic segment spans residues 1192 to 1249; sequence VGFVIVTFQEQGEQEYKNCELDKNQRQCVEYALKARPLRRYIPKNQHQYKVWYVVNST. One copy of the IV repeat lies at 1236 to 1509; it reads NQHQYKVWYV…LFVAVIMDNF (274 aa). A helical transmembrane segment spans residues 1250–1271; it reads YFEYLMFVLILLNTICLAMQHY. Topologically, residues 1272-1279 are extracellular; it reads GQSCLFKI. The helical transmembrane segment at 1280–1301 threads the bilayer; sequence AMNILNMLFTGLFTVEMILKLI. Residues 1302–1311 are Cytoplasmic-facing; sequence AFKPKGYFSD. Residues 1312–1331 form a helical membrane-spanning segment; that stretch reads PWNVFDFLIVIGSIIDVILS. Residues 1332 to 1354 lie on the Extracellular side of the membrane; sequence ETNPAEHTQCSPSMNAEENSRIS. A helical transmembrane segment spans residues 1355–1373; that stretch reads ITFFRLFRVMRLVKLLSRG. Over 1374-1391 the chain is Cytoplasmic; that stretch reads EGIRTLLWTFIKSFQALP. Residues 1392 to 1412 traverse the membrane as a helical segment; that stretch reads YVALLIVMLFFIYAVIGMQVF. The Extracellular portion of the chain corresponds to 1413-1434; sequence GKIALNDTTEINRNNNFQTFPQ. Asn-1418 is a glycosylation site (N-linked (GlcNAc...) asparagine). Positions 1435-1453 form an intramembrane region, pore-forming; sequence AVLLLFRCATGEAWQDIML. Residues 1444-1447 carry the Selectivity filter of repeat IV motif; sequence TGEA. Residues 1454–1481 are Extracellular-facing; that stretch reads ACMPGKKCAPESEPHNSTEGETPCGSSF. The interval 1460 to 1528 is dihydropyridine binding; that stretch reads KCAPESEPHN…LGPHHLDEFK (69 aa). An intrachain disulfide couples Cys-1461 to Cys-1477. Residue Asn-1469 is glycosylated (N-linked (GlcNAc...) asparagine). Residues 1474–1516 form a phenylalkylamine binding region; that stretch reads ETPCGSSFAVFYFISFYMLCAFLIINLFVAVIMDNFDYLTRDW. A helical membrane pass occupies residues 1482 to 1506; it reads AVFYFISFYMLCAFLIINLFVAVIM. Residues 1507–2171 are Cytoplasmic-facing; that stretch reads DNFDYLTRDW…ADRRAGVSSL (665 aa). The tract at residues 1641-1668 is important for interaction with STAC1, STAC2 and STAC3; sequence DEVTVGKFYATFLIQEYFRKFKKRKEQG. Residues 1647-1667 are calmodulin-binding IQ region; that stretch reads KFYATFLIQEYFRKFKKRKEQ. The important for localization in at the junctional membrane stretch occupies residues 1681–1700; sequence LQAGLRTLHDIGPEIRRAIS. Residues Ser-1700 and Ser-1721 each carry the phosphoserine modification. The interval 1760 to 1797 is disordered; it reads ISKAGNNQGDTESPSHEKLVDSTFTPSSYSSTGSNANI. The span at 1781-1793 shows a compositional bias: polar residues; sequence STFTPSSYSSTGS. Ser-1928 is modified (phosphoserine; by PKA). Disordered stretches follow at residues 1971–2014, 2026–2060, and 2114–2155; these read RSHS…EKLN, SGEN…GRQF, and SGGA…PGCG. The segment covering 2130–2140 has biased composition (basic and acidic residues); it reads NRRDPGRDRAG.

Belongs to the calcium channel alpha-1 subunit (TC 1.A.1.11) family. CACNA1C subfamily. Component of a calcium channel complex consisting of a pore-forming alpha subunit (CACNA1C) and ancillary beta, gamma and delta subunits. The channel complex contains alpha, beta, gamma and delta subunits in a 1:1:1:1 ratio, i.e. it contains only one of each type of subunit. CACNA1C channel activity is modulated by ancillary subunits, such as CACNB1, CACNB2, CACNB3, CACNA2D1 and CACNA2D4. Interacts with CACNB1. Interacts with CACNB2. Identified in a complex with CACNA2D4 and CACNB3. Interacts with CACNB3. Interacts with CACNA2D1. Interacts with the gamma subunits CACNG4, CACNG6, CACNG7 and CACNG8. Interacts with CACNA2D4. Interacts with CALM1. Interacts (via the N-terminus and the C-terminal C and IQ motifs) with CABP1; this inhibits Ca(2+)-dependent channel inactivation. The binding via the C motif is calcium independent whereas the binding via IQ requires the presence of calcium and is mutually exclusive with calmodulin binding. The binding to the cytoplasmic N-terminal domain is calcium independent but is essential for the channel modulation. Interacts (via C-terminal CDB motif) with CABP5; in a calcium-dependent manner. Interacts with CIB1; the interaction increases upon cardiomyocytes hypertrophy. Interacts with STAC1, STAC2 and STAC3; this inhibits channel inactivation, probably by hindering CALM1 binding. In terms of processing, phosphorylation by PKA at Ser-1928 activates the channel. Elevated levels of blood glucose lead to increased phosphorylation by PKA. Expression in cardiac muscle. In lung, expressed in airway and vascular smooth muscle cells.

The protein localises to the cell membrane. It is found in the sarcolemma. Its subcellular location is the perikaryon. The protein resides in the postsynaptic density membrane. It localises to the cell projection. The protein localises to the dendrite. It is found in the T-tubule. The catalysed reaction is Ca(2+)(in) = Ca(2+)(out). With respect to regulation, inhibited by dihydropyridines (DHP), such as isradipine. Inhibited by nifedipine. Channel activity is regulated by Ca(2+) and calmodulin. Binding of STAC1, STAC2 or STAC3 to a region that overlaps with the calmodulin binding site inhibits channel inactivation by Ca(2+) and calmodulin. Binding of calmodulin or CABP1 at the same regulatory sites results in opposite effects on the channel function. Shear stress and pressure increases calcium channel activity. Its function is as follows. Pore-forming, alpha-1C subunit of the voltage-gated calcium channel that gives rise to L-type calcium currents. Mediates influx of calcium ions into the cytoplasm, and thereby triggers calcium release from the sarcoplasm. Plays an important role in excitation-contraction coupling in the heart. Required for normal heart development and normal regulation of heart rhythm. Required for normal contraction of smooth muscle cells in blood vessels and in the intestine. Essential for normal blood pressure regulation via its role in the contraction of arterial smooth muscle cells. Long-lasting (L-type) calcium channels belong to the 'high-voltage activated' (HVA) group. The polypeptide is Voltage-dependent L-type calcium channel subunit alpha-1C (CACNA1C) (Oryctolagus cuniculus (Rabbit)).